We begin with the raw amino-acid sequence, 486 residues long: Acetyl-coenzyme A carboxylase carboxyl transferase subunit beta, chloroplastic (486 aa).

In terms of domain architecture, CoA carboxyltransferase N-terminal spans 224 to 486; that stretch reads LWVQCENCYG…FQFHGFFPRP (263 aa). Cysteine 228, cysteine 231, cysteine 247, and cysteine 250 together coordinate Zn(2+). A C4-type zinc finger spans residues 228-250; that stretch reads CENCYGLNYKKFFSSKMNICEQC.

Belongs to the AccD/PCCB family. In terms of assembly, acetyl-CoA carboxylase is a heterohexamer composed of biotin carboxyl carrier protein, biotin carboxylase and 2 subunits each of ACCase subunit alpha and ACCase plastid-coded subunit beta (accD). Zn(2+) is required as a cofactor.

Its subcellular location is the plastid. The protein localises to the chloroplast stroma. The enzyme catalyses N(6)-carboxybiotinyl-L-lysyl-[protein] + acetyl-CoA = N(6)-biotinyl-L-lysyl-[protein] + malonyl-CoA. It participates in lipid metabolism; malonyl-CoA biosynthesis; malonyl-CoA from acetyl-CoA: step 1/1. Component of the acetyl coenzyme A carboxylase (ACC) complex. Biotin carboxylase (BC) catalyzes the carboxylation of biotin on its carrier protein (BCCP) and then the CO(2) group is transferred by the transcarboxylase to acetyl-CoA to form malonyl-CoA. The polypeptide is Acetyl-coenzyme A carboxylase carboxyl transferase subunit beta, chloroplastic (Nymphaea alba (White water-lily)).